The following is a 193-amino-acid chain: Ion-translocating oxidoreductase complex subunit B (193 aa).

The segment at 1 to 26 (MSTMLIAVILLTLLALFFGVLLGFAA) is hydrophobic. The 4Fe-4S domain occupies 32-90 (EGNPIVDELEAILPQTQCGQCGYPGCRPYAEAIANGDKVNKCPPGGTATMEKLASLMGV). Residues Cys-49, Cys-52, Cys-57, Cys-73, Cys-114, Cys-117, Cys-120, Cys-124, Cys-144, Cys-147, Cys-150, and Cys-154 each coordinate [4Fe-4S] cluster. 4Fe-4S ferredoxin-type domains lie at 105–134 (KVAY…GAGK) and 136–164 (MHTV…MVPV).

The protein belongs to the 4Fe4S bacterial-type ferredoxin family. RnfB subfamily. As to quaternary structure, the complex is composed of six subunits: RnfA, RnfB, RnfC, RnfD, RnfE and RnfG. Requires [4Fe-4S] cluster as cofactor.

It localises to the cell inner membrane. Part of a membrane-bound complex that couples electron transfer with translocation of ions across the membrane. This chain is Ion-translocating oxidoreductase complex subunit B, found in Shewanella oneidensis (strain ATCC 700550 / JCM 31522 / CIP 106686 / LMG 19005 / NCIMB 14063 / MR-1).